Here is a 541-residue protein sequence, read N- to C-terminus: Neutral amino acid transporter B(0) (541 aa).

An N-acetylmethionine modification is found at Met1. Residues 1 to 10 show a composition bias toward basic and acidic residues; the sequence is MVADPPKGDP. Residues 1-32 form a disordered region; sequence MVADPPKGDPKGLAAVEPTANGAPAQDPLEDS. At 1-52 the chain is on the cytoplasmic side; the sequence is MVADPPKGDPKGLAAVEPTANGAPAQDPLEDSGAAVGRCCSSRDQVRRCLRA. Residues 53 to 82 form a helical membrane-spanning segment; the sequence is NLLVLLTVVAVVAGVALGLAVSGAGGALAL. At 83 to 95 the chain is on the extracellular side; the sequence is GPARLIAFAFPGE. A helical membrane pass occupies residues 96 to 117; it reads LLLRLLKMIILPLVVCSLVGGA. The Cytoplasmic segment spans residues 118–131; sequence ASLDPSALGRLGAW. The chain crosses the membrane as a helical span at residues 132 to 154; sequence ALLFFLVTTLLASALGVGLALAL. Over 155–225 the chain is Extracellular; that stretch reads QPGAAFAAMN…GTLVKVPVAH (71 aa). 2 N-linked (GlcNAc...) asparagine glycosylation sites follow: Asn164 and Asn215. The chain crosses the membrane as a helical span at residues 226–249; it reads EEEGMNILGLVVFAIVFGVALRKL. Over 250-258 the chain is Cytoplasmic; the sequence is GPEGEPLIR. A helical transmembrane segment spans residues 259 to 286; the sequence is FFNSFNDATMVLVSWIMWYAPVGILFLV. Residues 287 to 307 lie on the Extracellular side of the membrane; that stretch reads ASKIVEMDDVGVLFASLGKYI. Residues 308–329 traverse the membrane as a helical segment; the sequence is LCCLLGHAIHGLLVLPLIYFLF. Residues 330-334 lie on the Cytoplasmic side of the membrane; it reads TRKNP. Positions 335-365 form an intramembrane region, discontinuously helical; that stretch reads YRFLWGILTPLAMAFGTSSSSATLPLMMKCV. Residues 366–374 are Cytoplasmic-facing; that stretch reads EERNGVAKH. The chain crosses the membrane as a helical span at residues 375–401; the sequence is ISRFVLPIGATVNMDGAALFQCVAAVF. Gly383, Thr385, and Asn387 together coordinate Na(+). The Extracellular portion of the chain corresponds to 402–414; sequence IAQLNRQSLDFVK. Positions 415-448 form an intramembrane region, discontinuously helical; that stretch reads IITILVTATASSVGAAGIPAGGVLTLAIILEAVS. At 449 to 461 the chain is on the extracellular side; the sequence is LPVSEISLILAVD. Residues 462–483 traverse the membrane as a helical segment; the sequence is WLVDRSCTIINVEGDAFGAGLL. Na(+) is bound by residues Asn472 and Asp476. Residues 484 to 541 lie on the Cytoplasmic side of the membrane; the sequence is QHYVDRTEQRGSEPELTQVKSEVPLGSLPAPNEEGNPLLRHSPGAAGDAGACEKESVM. Positions 493-541 are disordered; sequence RGSEPELTQVKSEVPLGSLPAPNEEGNPLLRHSPGAAGDAGACEKESVM. Residues Ser495, Ser504, and Ser539 each carry the phosphoserine modification.

This sequence belongs to the dicarboxylate/amino acid:cation symporter (DAACS) (TC 2.A.23) family. SLC1A5 subfamily. In terms of assembly, homotrimer.

It is found in the cell membrane. The protein localises to the melanosome. The catalysed reaction is L-glutamine(out) + L-serine(in) + Na(+)(out) = L-glutamine(in) + L-serine(out) + Na(+)(in). It catalyses the reaction L-glutamine(in) + L-serine(out) + Na(+)(out) = L-glutamine(out) + L-serine(in) + Na(+)(in). It carries out the reaction L-threonine(in) + L-glutamine(out) + Na(+)(out) = L-threonine(out) + L-glutamine(in) + Na(+)(in). The enzyme catalyses L-threonine(out) + L-glutamine(in) + Na(+)(out) = L-threonine(in) + L-glutamine(out) + Na(+)(in). The catalysed reaction is L-asparagine(in) + L-glutamine(out) + Na(+)(out) = L-asparagine(out) + L-glutamine(in) + Na(+)(in). It catalyses the reaction L-asparagine(out) + L-glutamine(in) + Na(+)(out) = L-asparagine(in) + L-glutamine(out) + Na(+)(in). It carries out the reaction L-glutamine(in) + L-alanine(out) + Na(+)(out) = L-glutamine(out) + L-alanine(in) + Na(+)(in). The enzyme catalyses L-valine(out) + L-glutamine(in) + Na(+)(out) = L-valine(in) + L-glutamine(out) + Na(+)(in). The catalysed reaction is L-glutamine(in) + L-methionine(out) + Na(+)(out) = L-glutamine(out) + L-methionine(in) + Na(+)(in). It catalyses the reaction L-glutamine(in) + L-glutamate(out) + Na(+)(out) + H(+)(out) = L-glutamine(out) + L-glutamate(in) + Na(+)(in) + H(+)(in). It carries out the reaction D-serine(in) + L-glutamine(out) + Na(+)(out) = D-serine(out) + L-glutamine(in) + Na(+)(in). The enzyme catalyses D-serine(in) + L-alanine(out) + Na(+)(out) = D-serine(out) + L-alanine(in) + Na(+)(in). The catalysed reaction is nitrate(in) = nitrate(out). It catalyses the reaction iodide(out) = iodide(in). It carries out the reaction thiocyanate(in) = thiocyanate(out). In terms of biological role, sodium-coupled antiporter of neutral amino acids. In a tri-substrate transport cycle, exchanges neutral amino acids between the extracellular and intracellular compartments, coupled to the inward cotransport of at least one sodium ion. The preferred substrate is the essential amino acid L-glutamine, a precursor for biosynthesis of proteins, nucleotides and amine sugars as well as an alternative fuel for mitochondrial oxidative phosphorylation. Exchanges L-glutamine with other neutral amino acids such as L-serine, L-threonine and L-asparagine in a bidirectional way. Provides L-glutamine to proliferating stem and activated cells driving the metabolic switch toward cell differentiation. The transport cycle is usually pH-independent, with the exception of L-glutamate. Transports extracellular L-glutamate coupled to the cotransport of one proton and one sodium ion in exchange for intracellular L-glutamine counter-ion. May provide for L-glutamate uptake in glial cells regulating glutamine/glutamate cycle in the nervous system. Can transport D-amino acids. Mediates D-serine release from the retinal glia potentially affecting NMDA receptor function in retinal neurons. Displays sodium- and amino acid-dependent but uncoupled channel-like anion conductance with a preference SCN(-) &gt;&gt; NO3(-) &gt; I(-) &gt; Cl(-). Through binding of the fusogenic protein syncytin-1/ERVW-1 may mediate trophoblasts syncytialization, the spontaneous fusion of their plasma membranes, an essential process in placental development. This chain is Neutral amino acid transporter B(0) (SLC1A5), found in Oryctolagus cuniculus (Rabbit).